The sequence spans 234 residues: Glutathione S-transferase U16 (234 aa).

The GST N-terminal domain maps to Glu-5–Ala-85. Glutathione-binding positions include Ser-15 to Pro-16, Ser-42 to Lys-43, Lys-56 to Val-57, and Glu-69 to Ser-70. The 128-residue stretch at His-92–Phe-219 folds into the GST C-terminal domain.

The protein belongs to the GST superfamily. Tau family.

It is found in the cytoplasm. The protein localises to the cytosol. It catalyses the reaction RX + glutathione = an S-substituted glutathione + a halide anion + H(+). Its function is as follows. May be involved in the conjugation of reduced glutathione to a wide number of exogenous and endogenous hydrophobic electrophiles and have a detoxification role against certain herbicides. The sequence is that of Glutathione S-transferase U16 (GSTU16) from Arabidopsis thaliana (Mouse-ear cress).